Consider the following 78-residue polypeptide: Small nuclear ribonucleoprotein F (78 aa).

A Sm domain is found at 7–78 (NPKPFLQGLI…NVLWVGESTV (72 aa)).

The protein belongs to the snRNP Sm proteins family. SmF/LSm6 subfamily. As to quaternary structure, belongs to the 40S cdc5-associated complex (or cwf complex), a spliceosome sub-complex reminiscent of a late-stage spliceosome composed of the U2, U5 and U6 snRNAs and at least brr2, cdc5, cwf2/prp3, cwf3/syf1, cwf4/syf3, cwf5/ecm2, spp42/cwf6, cwf7/spf27, cwf8, cwf9, cwf10, cwf11, cwf12, prp45/cwf13, cwf14, cwf15, cwf16, cwf17, cwf18, cwf19, cwf20, cwf21, cwf22, cwf23, cwf24, cwf25, cwf26, cyp7/cwf27, cwf28, cwf29/ist3, lea1, msl1, prp5/cwf1, prp10, prp12/sap130, prp17, prp22, sap61, sap62, sap114, sap145, slu7, smb1, smd1, smd3, smf1, smg1 and syf2.

It localises to the nucleus. The protein resides in the cytoplasm. Its function is as follows. Plays a role in pre-mRNA splicing as a core component of the spliceosomal U1, U2, U4 and U5 small nuclear ribonucleoproteins (snRNPs), the building blocks of the spliceosome. In Schizosaccharomyces pombe (strain 972 / ATCC 24843) (Fission yeast), this protein is Small nuclear ribonucleoprotein F (smf1).